A 45-amino-acid polypeptide reads, in one-letter code: Large ribosomal subunit protein bL34 (45 aa).

This sequence belongs to the bacterial ribosomal protein bL34 family.

This chain is Large ribosomal subunit protein bL34, found in Salinispora tropica (strain ATCC BAA-916 / DSM 44818 / JCM 13857 / NBRC 105044 / CNB-440).